The chain runs to 392 residues: Succinate--CoA ligase [ADP-forming] subunit beta (392 aa).

The region spanning 9-248 (KEILRGFGVT…TSEEDPLEVE (240 aa)) is the ATP-grasp domain. ATP-binding positions include Lys50, 57–59 (GRG), Glu103, Met106, and Glu111. Residues Asn203 and Asp217 each coordinate Mg(2+). Residues Asn268 and 325–327 (GIV) contribute to the substrate site.

The protein belongs to the succinate/malate CoA ligase beta subunit family. In terms of assembly, heterotetramer of two alpha and two beta subunits. The cofactor is Mg(2+).

The catalysed reaction is succinate + ATP + CoA = succinyl-CoA + ADP + phosphate. It catalyses the reaction GTP + succinate + CoA = succinyl-CoA + GDP + phosphate. The protein operates within carbohydrate metabolism; tricarboxylic acid cycle; succinate from succinyl-CoA (ligase route): step 1/1. In terms of biological role, succinyl-CoA synthetase functions in the citric acid cycle (TCA), coupling the hydrolysis of succinyl-CoA to the synthesis of either ATP or GTP and thus represents the only step of substrate-level phosphorylation in the TCA. The beta subunit provides nucleotide specificity of the enzyme and binds the substrate succinate, while the binding sites for coenzyme A and phosphate are found in the alpha subunit. The sequence is that of Succinate--CoA ligase [ADP-forming] subunit beta from Chloroherpeton thalassium (strain ATCC 35110 / GB-78).